The sequence spans 478 residues: Membrane-bound lytic murein transglycosylase F (478 aa).

Positions 1-22 (MTRFLFAIILGLLLTACQQETV) are cleaved as a signal peptide. The tract at residues 23–257 (EETEFVPHKL…HLNEKYFGHV (235 aa)) is non-LT domain. The LT domain stretch occupies residues 258 to 478 (KRFDYIDTRA…PGTLSPDKPK (221 aa)). Glu-302 is a catalytic residue. A disordered region spans residues 447–478 (KQQNSEEVAPSDLTAEETPVPAPGTLSPDKPK).

This sequence in the N-terminal section; belongs to the bacterial solute-binding protein 3 family. The protein in the C-terminal section; belongs to the transglycosylase Slt family.

The protein localises to the cell outer membrane. It catalyses the reaction Exolytic cleavage of the (1-&gt;4)-beta-glycosidic linkage between N-acetylmuramic acid (MurNAc) and N-acetylglucosamine (GlcNAc) residues in peptidoglycan, from either the reducing or the non-reducing ends of the peptidoglycan chains, with concomitant formation of a 1,6-anhydrobond in the MurNAc residue.. Its function is as follows. Murein-degrading enzyme that degrades murein glycan strands and insoluble, high-molecular weight murein sacculi, with the concomitant formation of a 1,6-anhydromuramoyl product. Lytic transglycosylases (LTs) play an integral role in the metabolism of the peptidoglycan (PG) sacculus. Their lytic action creates space within the PG sacculus to allow for its expansion as well as for the insertion of various structures such as secretion systems and flagella. The polypeptide is Membrane-bound lytic murein transglycosylase F (Shewanella oneidensis (strain ATCC 700550 / JCM 31522 / CIP 106686 / LMG 19005 / NCIMB 14063 / MR-1)).